The primary structure comprises 265 residues: Transcription factor BHLH062 (265 aa).

The tract at residues 1–26 (MVPRDRVNAAAAGGGGEGRLVQSGIV) is disordered. The tract at residues 35–48 (PKRIHKSEREKLKR) is basic motif; degenerate. The 51-residue stretch at 35-85 (PKRIHKSEREKLKRDKQNDLFNELGNLLEPDRQNNGKACVLGETTRILKDL) folds into the bHLH domain. The segment at 49–85 (DKQNDLFNELGNLLEPDRQNNGKACVLGETTRILKDL) is helix-loop-helix motif. Residues 75–130 (LGETTRILKDLLSQVESLRKENSSLKNESHYVALERNELHDDNSMLRTEILELQNE) are a coiled coil. A disordered region spans residues 200 to 265 (ESATSEDSEP…TNEEDRIGRS (66 aa)). A compositionally biased stretch (basic and acidic residues) spans 210–220 (SQEHGISDHVT). A compositionally biased stretch (polar residues) spans 245–256 (QDQQCSSGTSGT).

This sequence belongs to the bHLH protein family. As to quaternary structure, interacts with TIFY11A/JAZ9.

The protein resides in the nucleus. In terms of biological role, transcription factor that plays a positive role in salt stress tolerance. Interacts with TIFY11A/JAZ9 and binds to the promoter of some potassium ion transporter genes to regulate potassium homeostasis during salt stress. This Oryza sativa subsp. japonica (Rice) protein is Transcription factor BHLH062.